The primary structure comprises 224 residues: Glycerol-3-phosphate acyltransferase (224 aa).

6 helical membrane-spanning segments follow: residues 4 to 24 (FVIVLINLAFCLGAYLFGSIN), 60 to 80 (LVIFALDILKTYLASLLVYFV), 88 to 108 (SVVVFHAVAYCVVIGHIFPIW), 124 to 144 (IISVNIIIAVIGAIVYLLIII), 149 to 169 (IVSFTTLITIPSLLPLMFIPW), and 182 to 202 (WPWWISPLVYVLIILLVIWSH).

The protein belongs to the PlsY family. Probably interacts with PlsX.

It is found in the cell membrane. It carries out the reaction an acyl phosphate + sn-glycerol 3-phosphate = a 1-acyl-sn-glycero-3-phosphate + phosphate. Its pathway is lipid metabolism; phospholipid metabolism. Catalyzes the transfer of an acyl group from acyl-phosphate (acyl-PO(4)) to glycerol-3-phosphate (G3P) to form lysophosphatidic acid (LPA). This enzyme utilizes acyl-phosphate as fatty acyl donor, but not acyl-CoA or acyl-ACP. This Mycoplasmopsis pulmonis (strain UAB CTIP) (Mycoplasma pulmonis) protein is Glycerol-3-phosphate acyltransferase.